Reading from the N-terminus, the 317-residue chain is E3 ubiquitin-protein ligase NRDP1 (317 aa).

An RING-type; degenerate zinc finger spans residues 18–57 (CPICSGVLEEPVQAPHCEHAFCNACITQWFSQQQTCPVDR). Positions 135–175 (IKHLRSVVQQQQIRIGELEKTAAESKHQLSEQKRDIQLLKA) form a coiled coil.

The enzyme catalyses S-ubiquitinyl-[E2 ubiquitin-conjugating enzyme]-L-cysteine + [acceptor protein]-L-lysine = [E2 ubiquitin-conjugating enzyme]-L-cysteine + N(6)-ubiquitinyl-[acceptor protein]-L-lysine.. The protein operates within protein modification; protein ubiquitination. Acts as E3 ubiquitin-protein ligase and regulates the degradation of target proteins. The polypeptide is E3 ubiquitin-protein ligase NRDP1 (rnf41) (Xenopus laevis (African clawed frog)).